Here is a 155-residue protein sequence, read N- to C-terminus: Class I hydrophobin C (155 aa).

A signal peptide spans M1–G22. Disulfide bonds link C52–C129, C60–C123, C61–C101, and C130–C148.

The protein belongs to the fungal hydrophobin family. Self-assembles to form functional amyloid fibrils called rodlets. Self-assembly into fibrillar rodlets occurs spontaneously at hydrophobic:hydrophilic interfaces and the rodlets further associate laterally to form amphipathic monolayers.

It is found in the secreted. It localises to the spore wall. Aerial growth, conidiation, and dispersal of filamentous fungi in the environment rely upon a capability of their secreting small amphipathic proteins called hydrophobins (HPBs) with low sequence identity. Class I can self-assemble into an outermost layer of rodlet bundles on aerial cell surfaces, conferring cellular hydrophobicity that supports fungal growth, development and dispersal; whereas Class II form highly ordered films at water-air interfaces through intermolecular interactions but contribute nothing to the rodlet structure. RodC is a class I hydrophobin that, unlike rodA, is not required for rodlet formation. This Aspergillus fumigatus (strain ATCC MYA-4609 / CBS 101355 / FGSC A1100 / Af293) (Neosartorya fumigata) protein is Class I hydrophobin C.